The sequence spans 170 residues: Myosin regulatory light chain 2, skeletal muscle isoform type 1 (170 aa).

A N,N,N-trimethylalanine modification is found at A2. S16 and S17 each carry phosphoserine. A phosphothreonine mark is found at T26 and T36. Positions 26-61 (TQIQEFKEAFTVIDQNRDGIIDKEDLRDTFAAMGRL) constitute an EF-hand 1 domain. Residues D39, N41, D43, and D50 each coordinate Ca(2+). S76 is subject to Phosphoserine. EF-hand domains are found at residues 96-131 (DPED…QCDR) and 132-167 (FSQE…GDAK). Residue T102 is modified to Phosphothreonine.

As to quaternary structure, myosin is a hexamer of 2 heavy chains and 4 light chains.

The protein is Myosin regulatory light chain 2, skeletal muscle isoform type 1 of Oryctolagus cuniculus (Rabbit).